A 92-amino-acid chain; its full sequence is Small ribosomal subunit protein uS19 (92 aa).

Belongs to the universal ribosomal protein uS19 family.

Functionally, protein S19 forms a complex with S13 that binds strongly to the 16S ribosomal RNA. This Rhodospirillum rubrum (strain ATCC 11170 / ATH 1.1.1 / DSM 467 / LMG 4362 / NCIMB 8255 / S1) protein is Small ribosomal subunit protein uS19.